A 271-amino-acid polypeptide reads, in one-letter code: ATP synthase subunit a (271 aa).

5 consecutive transmembrane segments (helical) span residues 40–60 (TINI…LVLF), 100–120 (LIAP…LMDL), 146–166 (DVNV…FYSI), 220–240 (LIFI…LNVP), and 242–262 (AIFH…LTIV).

Belongs to the ATPase A chain family. As to quaternary structure, F-type ATPases have 2 components, CF(1) - the catalytic core - and CF(0) - the membrane proton channel. CF(1) has five subunits: alpha(3), beta(3), gamma(1), delta(1), epsilon(1). CF(0) has three main subunits: a(1), b(2) and c(9-12). The alpha and beta chains form an alternating ring which encloses part of the gamma chain. CF(1) is attached to CF(0) by a central stalk formed by the gamma and epsilon chains, while a peripheral stalk is formed by the delta and b chains.

Its subcellular location is the cell inner membrane. Functionally, key component of the proton channel; it plays a direct role in the translocation of protons across the membrane. This is ATP synthase subunit a from Escherichia coli O8 (strain IAI1).